Reading from the N-terminus, the 871-residue chain is Coatomer subunit gamma-2 (871 aa).

Basic and acidic residues predominate over residues M1–E11. Residues M1 to H21 are disordered. HEAT repeat units lie at residues T64 to D101, R283 to S320, A321 to S355, S356 to R392, S395 to E430, and P467 to S504. Residue T594 is modified to Phosphothreonine.

Belongs to the COPG family. Oligomeric complex. Binds to CDC42. Interacts with JAGN1. Interacts with TMED10 (via cytoplasmic domain).

Its subcellular location is the cytoplasm. It localises to the cytosol. The protein localises to the golgi apparatus membrane. It is found in the cytoplasmic vesicle. The protein resides in the COPI-coated vesicle membrane. Its function is as follows. The coatomer is a cytosolic protein complex that binds to dilysine motifs and reversibly associates with Golgi non-clathrin-coated vesicles, which further mediate biosynthetic protein transport from the ER, via the Golgi up to the trans Golgi network. Coatomer complex is required for budding from Golgi membranes, and is essential for the retrograde Golgi-to-ER transport of dilysine-tagged proteins. In mammals, the coatomer can only be recruited by membranes associated to ADP-ribosylation factors (ARFs), which are small GTP-binding proteins; the complex also influences the Golgi structural integrity, as well as the processing, activity, and endocytic recycling of LDL receptors. This is Coatomer subunit gamma-2 (COPG2) from Homo sapiens (Human).